A 310-amino-acid polypeptide reads, in one-letter code: Mitogen-activated protein kinase kinase 9 (310 aa).

The region spanning 47–306 is the Protein kinase domain; the sequence is LEKLNVLGCG…APQLLAHPFL (260 aa). Residues 53–61 and Lys-76 contribute to the ATP site; that span reads LGCGNGGIV. The active-site Proton acceptor is the Asp-167. Phosphoserine occurs at positions 195 and 201. Thr-205 bears the Phosphothreonine mark.

It belongs to the protein kinase superfamily. STE Ser/Thr protein kinase family. MAP kinase kinase subfamily. Post-translationally, phosphorylation at Ser-195 and Ser-201 by MAP kinase kinase kinases positively regulates kinase activity. Autophosphorylated.

The protein localises to the cytoplasm. Its subcellular location is the nucleus. It carries out the reaction L-seryl-[protein] + ATP = O-phospho-L-seryl-[protein] + ADP + H(+). The catalysed reaction is L-threonyl-[protein] + ATP = O-phospho-L-threonyl-[protein] + ADP + H(+). It catalyses the reaction L-tyrosyl-[protein] + ATP = O-phospho-L-tyrosyl-[protein] + ADP + H(+). Its function is as follows. MKK9-MPK3/MPK6 module phosphorylates and activates EIN3, leading to the promotion of EIN3-mediated transcription in ethylene signaling. Autophosphorylates and also phosphorylates MPK3 and MPK6. Plays an important role in ethylene and camalexin biosynthesis and in salt stress response. MKK9-MPK6 module positively regulates leaf senescence. The sequence is that of Mitogen-activated protein kinase kinase 9 (MKK9) from Arabidopsis thaliana (Mouse-ear cress).